The sequence spans 232 residues: Cytidylate kinase (232 aa).

11 to 19 (GPAGAGKST) is an ATP binding site.

It belongs to the cytidylate kinase family. Type 1 subfamily.

The protein localises to the cytoplasm. The catalysed reaction is CMP + ATP = CDP + ADP. The enzyme catalyses dCMP + ATP = dCDP + ADP. The chain is Cytidylate kinase from Roseiflexus castenholzii (strain DSM 13941 / HLO8).